The following is a 63-amino-acid chain: Odorranain-B1 (63 aa).

A signal peptide spans 1–22 (MFTTKKPLLLLFFLGIISLSVC). A propeptide spanning residues 23 to 41 (EQERDADEEDGGEVTEEEV) is cleaved from the precursor.

Belongs to the frog skin active peptide (FSAP) family. Brevinin subfamily. In terms of tissue distribution, expressed by the skin glands.

It is found in the secreted. The chain is Odorranain-B1 from Odorrana hainanensis (Odor frog).